Consider the following 142-residue polypeptide: Small ribosomal subunit protein uS12 (142 aa).

Residues 1-44 (MANGKYAARKLKQDRQKHRWSDSDYARRARGLGKKSDPLEGAPQ) are disordered. Basic and acidic residues predominate over residues 11-27 (LKQDRQKHRWSDSDYAR).

It belongs to the universal ribosomal protein uS12 family. As to quaternary structure, part of the 30S ribosomal subunit.

With S4 and S5 plays an important role in translational accuracy. Located at the interface of the 30S and 50S subunits. This Natronomonas pharaonis (strain ATCC 35678 / DSM 2160 / CIP 103997 / JCM 8858 / NBRC 14720 / NCIMB 2260 / Gabara) (Halobacterium pharaonis) protein is Small ribosomal subunit protein uS12.